Here is a 197-residue protein sequence, read N- to C-terminus: Dephospho-CoA kinase (197 aa).

Residues 4-197 enclose the DPCK domain; it reads LIGLTGGIAT…VLKWLKTITK (194 aa). An ATP-binding site is contributed by 12–17; it reads ATGKST.

Belongs to the CoaE family.

The protein localises to the cytoplasm. The catalysed reaction is 3'-dephospho-CoA + ATP = ADP + CoA + H(+). It participates in cofactor biosynthesis; coenzyme A biosynthesis; CoA from (R)-pantothenate: step 5/5. Catalyzes the phosphorylation of the 3'-hydroxyl group of dephosphocoenzyme A to form coenzyme A. The polypeptide is Dephospho-CoA kinase (Lactiplantibacillus plantarum (strain ATCC BAA-793 / NCIMB 8826 / WCFS1) (Lactobacillus plantarum)).